The following is a 65-amino-acid chain: Large ribosomal subunit protein bL35 (65 aa).

The interval 1-26 (MPKIKTVRGAAKRFKKTASGGFKRKQ) is disordered. Positions 10 to 26 (AAKRFKKTASGGFKRKQ) are enriched in basic residues.

The protein belongs to the bacterial ribosomal protein bL35 family.

The chain is Large ribosomal subunit protein bL35 from Mannheimia succiniciproducens (strain KCTC 0769BP / MBEL55E).